We begin with the raw amino-acid sequence, 420 residues long: Coiled-coil domain-containing protein 85C (420 aa).

N-acetylalanine is present on Ala-2. Coiled coils occupy residues 26-92 (ELLR…RELC) and 122-165 (HEVA…LAAA). The disordered stretch occupies residues 165–271 (AGGAGGGGGG…NGLHDPSSTY (107 aa)). The segment covering 166–176 (GGAGGGGGGAG) has biased composition (gly residues). The residue at position 179 (Ser-179) is a Phosphoserine. The span at 185-212 (ASLSGPLAGSAAGSGARDVGDGSSTSSA) shows a compositional bias: low complexity. At Ser-247 the chain carries Phosphoserine.

This sequence belongs to the CCDC85 family. As to quaternary structure, may interact with ARVCF, CTNND1, CTNND2 and PKP4. Predominantly expressed on the surface of the lateral ventricular walls of the developing cerebral cortex.

Its subcellular location is the cell junction. It localises to the tight junction. The protein localises to the adherens junction. Functionally, may play a role in cell-cell adhesion and epithelium development through its interaction with proteins of the beta-catenin family. May play an important role in cortical development, especially in the maintenance of radial glia. This is Coiled-coil domain-containing protein 85C (Ccdc85c) from Mus musculus (Mouse).